The chain runs to 248 residues: 5'-nucleotidase SurE (248 aa).

Residues D8, D9, S39, and N91 each coordinate a divalent metal cation.

The protein belongs to the SurE nucleotidase family. A divalent metal cation serves as cofactor.

The protein resides in the cytoplasm. The catalysed reaction is a ribonucleoside 5'-phosphate + H2O = a ribonucleoside + phosphate. Nucleotidase that shows phosphatase activity on nucleoside 5'-monophosphates. The protein is 5'-nucleotidase SurE of Shewanella amazonensis (strain ATCC BAA-1098 / SB2B).